The primary structure comprises 190 residues: Remorin (190 aa).

Over residues 1–12 (MAEEQKTSKVDV) the composition is skewed to basic and acidic residues. Disordered stretches follow at residues 1–45 (MAEE…VESK) and 50–69 (VEKP…SADR). Ser14 carries the phosphoserine modification. Phosphothreonine is present on Thr58. Positions 92-147 (EKSKAENRAQKKISDVHAWENSKKAAVEAQLRKIEEKLEKKKAQYGEKMKNKVAAI) form a coiled coil.

Belongs to the remorin family. In terms of assembly, may polymerize to form filamentous structures. As to expression, expressed in roots, leaves, stems, flowers and siliques, with a maximal expression in apical regions.

In terms of biological role, exhibits a non sequence-specific DNA-binding activity. This chain is Remorin (DBP), found in Arabidopsis thaliana (Mouse-ear cress).